A 531-amino-acid polypeptide reads, in one-letter code: Light-independent protochlorophyllide reductase subunit B (531 aa).

[4Fe-4S] cluster is bound at residue Asp36. The Proton donor role is filled by Asp287. 422–423 (GL) contributes to the substrate binding site.

The protein belongs to the ChlB/BchB/BchZ family. In terms of assembly, protochlorophyllide reductase is composed of three subunits; BchL, BchN and BchB. Forms a heterotetramer of two BchB and two BchN subunits. [4Fe-4S] cluster serves as cofactor.

It carries out the reaction chlorophyllide a + oxidized 2[4Fe-4S]-[ferredoxin] + 2 ADP + 2 phosphate = protochlorophyllide a + reduced 2[4Fe-4S]-[ferredoxin] + 2 ATP + 2 H2O. It functions in the pathway porphyrin-containing compound metabolism; bacteriochlorophyll biosynthesis (light-independent). Component of the dark-operative protochlorophyllide reductase (DPOR) that uses Mg-ATP and reduced ferredoxin to reduce ring D of protochlorophyllide (Pchlide) to form chlorophyllide a (Chlide). This reaction is light-independent. The NB-protein (BchN-BchB) is the catalytic component of the complex. The sequence is that of Light-independent protochlorophyllide reductase subunit B from Rhodopseudomonas palustris (strain BisA53).